The following is a 398-amino-acid chain: Phosphoglycerate kinase (398 aa).

Residues 20 to 22 (DLN), Arg35, 58 to 61 (HLGR), Arg118, and Arg155 contribute to the substrate site. ATP contacts are provided by residues Lys206, Gly295, Glu326, and 354 to 357 (GGDS).

The protein belongs to the phosphoglycerate kinase family. In terms of assembly, monomer.

It localises to the cytoplasm. It catalyses the reaction (2R)-3-phosphoglycerate + ATP = (2R)-3-phospho-glyceroyl phosphate + ADP. It functions in the pathway carbohydrate degradation; glycolysis; pyruvate from D-glyceraldehyde 3-phosphate: step 2/5. The sequence is that of Phosphoglycerate kinase from Onion yellows phytoplasma (strain OY-M).